Consider the following 309-residue polypeptide: MKIVFMGTPDFAVPSLKSLINEFGVEAVFTQPDRPKGRGKKLGMSPVKEVALEHNIPVYQPLRLKNEPETIEELKNMEPDFIIVVAFGQILPKEVLDIPKYGCINLHASLLPKFRGAAPLNWSIIKGEKVTGNTTMLMDVGLDTGDMLLKDEVEITDNMTAGELHDILMERGGELLVRTIKGILNNEITPEKQNEEETCYAPMLNKEIAKIDWSLSAQDIHNLVRGLNPWPVALTSYDDITMKVHQTRVEKGESNKEPGTIIAVDKTGIKVSTGKDILVIEKLQFPNSKQLFVEQFINGNTIEVGKVLK.

Position 109 to 112 (109 to 112 (SLLP)) interacts with (6S)-5,6,7,8-tetrahydrofolate.

This sequence belongs to the Fmt family.

It catalyses the reaction L-methionyl-tRNA(fMet) + (6R)-10-formyltetrahydrofolate = N-formyl-L-methionyl-tRNA(fMet) + (6S)-5,6,7,8-tetrahydrofolate + H(+). In terms of biological role, attaches a formyl group to the free amino group of methionyl-tRNA(fMet). The formyl group appears to play a dual role in the initiator identity of N-formylmethionyl-tRNA by promoting its recognition by IF2 and preventing the misappropriation of this tRNA by the elongation apparatus. The polypeptide is Methionyl-tRNA formyltransferase (Clostridium perfringens (strain SM101 / Type A)).